The following is a 56-amino-acid chain: Repressor-like protein SSo7c4 (56 aa).

In terms of domain architecture, SpoVT-AbrB spans 4–51 (EEIVKVSRNYQVTIPAKVRQKFQIKEGDLVKVTFDESGGVVKIQLLDS).

In Saccharolobus solfataricus (strain ATCC 35092 / DSM 1617 / JCM 11322 / P2) (Sulfolobus solfataricus), this protein is Repressor-like protein SSo7c4.